Here is a 248-residue protein sequence, read N- to C-terminus: Ubiquinone biosynthesis O-methyltransferase (248 aa).

Positions 40, 71, 92, and 135 each coordinate S-adenosyl-L-methionine.

This sequence belongs to the methyltransferase superfamily. UbiG/COQ3 family.

The enzyme catalyses a 3-demethylubiquinol + S-adenosyl-L-methionine = a ubiquinol + S-adenosyl-L-homocysteine + H(+). It catalyses the reaction a 3-(all-trans-polyprenyl)benzene-1,2-diol + S-adenosyl-L-methionine = a 2-methoxy-6-(all-trans-polyprenyl)phenol + S-adenosyl-L-homocysteine + H(+). Its pathway is cofactor biosynthesis; ubiquinone biosynthesis. In terms of biological role, O-methyltransferase that catalyzes the 2 O-methylation steps in the ubiquinone biosynthetic pathway. The polypeptide is Ubiquinone biosynthesis O-methyltransferase (Dinoroseobacter shibae (strain DSM 16493 / NCIMB 14021 / DFL 12)).